The sequence spans 291 residues: 33 kDa chaperonin (291 aa).

2 disulfides stabilise this stretch: C235–C237 and C268–C271.

It belongs to the HSP33 family. In terms of processing, under oxidizing conditions two disulfide bonds are formed involving the reactive cysteines. Under reducing conditions zinc is bound to the reactive cysteines and the protein is inactive.

The protein localises to the cytoplasm. Redox regulated molecular chaperone. Protects both thermally unfolding and oxidatively damaged proteins from irreversible aggregation. Plays an important role in the bacterial defense system toward oxidative stress. The polypeptide is 33 kDa chaperonin (Streptococcus agalactiae serotype III (strain NEM316)).